The primary structure comprises 450 residues: Tubulin alpha-6 chain (450 aa).

Residues glutamine 11, glutamate 71, glycine 144, threonine 145, threonine 179, asparagine 206, and asparagine 228 each contribute to the GTP site. Glutamate 71 contributes to the Mg(2+) binding site. Glutamate 254 is an active-site residue.

It belongs to the tubulin family. In terms of assembly, dimer of alpha and beta chains. A typical microtubule is a hollow water-filled tube with an outer diameter of 25 nm and an inner diameter of 15 nM. Alpha-beta heterodimers associate head-to-tail to form protofilaments running lengthwise along the microtubule wall with the beta-tubulin subunit facing the microtubule plus end conferring a structural polarity. Microtubules usually have 13 protofilaments but different protofilament numbers can be found in some organisms and specialized cells. The cofactor is Mg(2+). In terms of processing, undergoes a tyrosination/detyrosination cycle, the cyclic removal and re-addition of a C-terminal tyrosine residue by the enzymes tubulin tyrosine carboxypeptidase (TTCP) and tubulin tyrosine ligase (TTL), respectively.

The protein resides in the cytoplasm. The protein localises to the cytoskeleton. The enzyme catalyses GTP + H2O = GDP + phosphate + H(+). Functionally, tubulin is the major constituent of microtubules, a cylinder consisting of laterally associated linear protofilaments composed of alpha- and beta-tubulin heterodimers. Microtubules grow by the addition of GTP-tubulin dimers to the microtubule end, where a stabilizing cap forms. Below the cap, tubulin dimers are in GDP-bound state, owing to GTPase activity of alpha-tubulin. The chain is Tubulin alpha-6 chain (TUBA6) from Zea mays (Maize).